The primary structure comprises 198 residues: ATP synthase protein MI25 (198 aa).

The helical transmembrane segment at 29–49 (ISIYNEEMIVALCFIGFIIFS) threads the bilayer.

It belongs to the ATPase protein MI25 family. F-type ATPases have 2 components, CF(1) - the catalytic core - and CF(0) - the membrane proton channel. CF(1) has five subunits: alpha(3), beta(3), gamma(1), delta(1), epsilon(1). CF(0) has three main subunits: a, b and c.

It is found in the mitochondrion membrane. Its function is as follows. This is one of the chains of the nonenzymatic component (CF(0) subunit) of the mitochondrial ATPase complex. The sequence is that of ATP synthase protein MI25 from Nicotiana tabacum (Common tobacco).